The primary structure comprises 337 residues: Glyceraldehyde-3-phosphate dehydrogenase 2 (337 aa).

Residues 11–12 (RI), Asp35, Arg80, and Thr122 contribute to the NADP(+) site. Residues 153-155 (SCT), Thr184, Arg199, 212-213 (TG), and Arg235 each bind D-glyceraldehyde 3-phosphate. The Nucleophile role is filled by Cys154. Asn317 is an NADP(+) binding site.

Homotetramer.

The protein resides in the cytoplasm. The enzyme catalyses D-glyceraldehyde 3-phosphate + phosphate + NADP(+) = (2R)-3-phospho-glyceroyl phosphate + NADPH + H(+). It carries out the reaction D-glyceraldehyde 3-phosphate + phosphate + NAD(+) = (2R)-3-phospho-glyceroyl phosphate + NADH + H(+). The protein operates within carbohydrate biosynthesis; Calvin cycle. Gap2 has a major role in carbon fixation as a component of the Calvin cycle. Catalyzes the oxidative phosphorylation of glyceraldehyde 3-phosphate (G3P) to 1,3-bisphosphoglycerate (BPG) using the cofactor NADP. The first reaction step involves the formation of a hemiacetal intermediate between G3P and a cysteine residue, and this hemiacetal intermediate is then oxidized to a thioester, with concomitant reduction of NADP to NADPH. The reduced NADPH is then exchanged with the second NAD, and the thioester is attacked by a nucleophilic inorganic phosphate to produce BPG. The sequence is that of Glyceraldehyde-3-phosphate dehydrogenase 2 (gap2) from Nostoc sp. (strain PCC 7120 / SAG 25.82 / UTEX 2576).